Consider the following 656-residue polypeptide: MANLYSKKVRKSIRKFIRSGLNFDLLHEKHGRRLIINNIFVKLPPKYYNFAKGLDLNNILAFDSEIIQLNDLKKLIMRLPLLPDCFTDVISCHKKYLLSDAAIVNKLINSNMVSLSDIRNIIDNRIKTPVEIALLNSSLVIPGTPFSLDEVKYIFENTSAENVKELYKRIETPIHSVLYMEEKFSISPVHSSLYQVTDVDKIIYLIKKYPDDDIIDYVNGIVKSKKDFIESIITIIKDRLPDISPCLNKWISTQLPPDKLRDEFGIYFYALFEWIDIPLYIDKYLFLNITEDETKFICRYIDIYKKKSELFVNAFRWHLYYCNSMYPQKVFPVITYKQDSKEKYVVKESFKYLDNKQTMKVLLNDFKYNYAIGKYILDSSSSNEVKMDALNMLQKQVVCLENAKCFDLGNLYSVLIKFQYHPVDYVMYSDKLLDYMSKNSTFDNNDIGLLTLASFLFSTAKKGIIDINFLNTNSLWSPLMYLIDDSCKVDFTRFMMATKNIKADNINYLKNKDENINNNFEHIDNIDIYKLLDYSRIKLYGINFIKKVILANVIFEYIFTLIIIRYQKTSYNLRSFLEMLLYRCLKGFGISPKLYKNVYVNEMNICCELENLINNYVVPFKTYGILMKLLITIFNNLNGISKHSFRIRVRKSKTLL.

A helical transmembrane segment spans residues 544-564; sequence FIKKVILANVIFEYIFTLIII.

Belongs to the chordopoxvirinae O1 family.

The protein localises to the membrane. This chain is Protein O1 homolog, found in Vertebrata (FPV).